A 587-amino-acid polypeptide reads, in one-letter code: Aspartate--tRNA(Asp/Asn) ligase (587 aa).

Residue Glu173 coordinates L-aspartate. The interval 197–200 is aspartate; that stretch reads QLFK. Arg219 contributes to the L-aspartate binding site. ATP-binding positions include 219-221 and Gln228; that span reads RDE. An L-aspartate-binding site is contributed by His448. An ATP-binding site is contributed by Glu481. L-aspartate is bound at residue Arg488. An ATP-binding site is contributed by 533–536; that stretch reads GLDR.

The protein belongs to the class-II aminoacyl-tRNA synthetase family. Type 1 subfamily. As to quaternary structure, homodimer.

It localises to the cytoplasm. It carries out the reaction tRNA(Asx) + L-aspartate + ATP = L-aspartyl-tRNA(Asx) + AMP + diphosphate. In terms of biological role, aspartyl-tRNA synthetase with relaxed tRNA specificity since it is able to aspartylate not only its cognate tRNA(Asp) but also tRNA(Asn). Reaction proceeds in two steps: L-aspartate is first activated by ATP to form Asp-AMP and then transferred to the acceptor end of tRNA(Asp/Asn). This chain is Aspartate--tRNA(Asp/Asn) ligase, found in Alcanivorax borkumensis (strain ATCC 700651 / DSM 11573 / NCIMB 13689 / SK2).